The chain runs to 455 residues: Keratin, type I cuticular Ha5 (455 aa).

The head stretch occupies residues Met-1–Glu-97. Residues Glu-97 to Leu-408 enclose the IF rod domain. The coil 1A stretch occupies residues Lys-98–Trp-132. The interval Cys-133–Asp-143 is linker 1. Positions Tyr-144 to Cys-244 are coil 1B. The tract at residues Gln-245–Val-260 is linker 12. A coil 2 region spans residues Asp-261–Glu-404. The tail stretch occupies residues Asp-405 to Phe-455.

This sequence belongs to the intermediate filament family.

The sequence is that of Keratin, type I cuticular Ha5 from Mus musculus (Mouse).